The following is a 215-amino-acid chain: Phosphatidylserine decarboxylase proenzyme (215 aa).

The active-site Schiff-base intermediate with substrate; via pyruvic acid is serine 184. At serine 184 the chain carries Pyruvic acid (Ser); by autocatalysis.

It belongs to the phosphatidylserine decarboxylase family. PSD-A subfamily. Heterodimer of a large membrane-associated beta subunit and a small pyruvoyl-containing alpha subunit. The cofactor is pyruvate. In terms of processing, is synthesized initially as an inactive proenzyme. Formation of the active enzyme involves a self-maturation process in which the active site pyruvoyl group is generated from an internal serine residue via an autocatalytic post-translational modification. Two non-identical subunits are generated from the proenzyme in this reaction, and the pyruvate is formed at the N-terminus of the alpha chain, which is derived from the carboxyl end of the proenzyme. The post-translation cleavage follows an unusual pathway, termed non-hydrolytic serinolysis, in which the side chain hydroxyl group of the serine supplies its oxygen atom to form the C-terminus of the beta chain, while the remainder of the serine residue undergoes an oxidative deamination to produce ammonia and the pyruvoyl prosthetic group on the alpha chain.

It localises to the cell membrane. It catalyses the reaction a 1,2-diacyl-sn-glycero-3-phospho-L-serine + H(+) = a 1,2-diacyl-sn-glycero-3-phosphoethanolamine + CO2. It functions in the pathway phospholipid metabolism; phosphatidylethanolamine biosynthesis; phosphatidylethanolamine from CDP-diacylglycerol: step 2/2. Its function is as follows. Catalyzes the formation of phosphatidylethanolamine (PtdEtn) from phosphatidylserine (PtdSer). In Ralstonia pickettii (strain 12J), this protein is Phosphatidylserine decarboxylase proenzyme.